We begin with the raw amino-acid sequence, 470 residues long: MSFSRRQFLQASGIALCAGAIPLRANAAGQQQPLPVPPLLESRRGQPLFMTLQRAHWSFTQGTRAPVWGVNGRYLGPTIRVWKGDDVKLIYSNRLAENVSMTVAGLLVPGPLMGGPARMMSPNADWAPVLPIRQSAATLWYHANTPNRTAQQVYNGLAGMWLVEDDISKTLPIPNHYGVDDFPVIIQDKRLDNFGTPEYSEPGSGGFVGDTLLVNGAQSPYVEVSRGWVRLRLLNASNSRRYQLQMSDGRALHVISGDQGFLPAPVSVKQLSLAPGERREILVDMTNGDEVSITCGEAASIVDRIRGFFEPSSILVSTLVLTLRPTGLLPLVTDNLPMRLLPTEIMSGAPVRSRDISLGDDPGINGQLWDVNRIDITAQQGTWERWTVRADMPQSFHIEGVSFLIRNVNGAMPFPEDRGWKDTVWVDGQVELLVYYGQPSWPHFPFYFNSQTLEMADRGSIGQMLVNPAS.

Residues 1-27 (MSFSRRQFLQASGIALCAGAIPLRANA) constitute a signal peptide (tat-type signal). Residues 222–287 (VEVSRGWVRL…RREILVDMTN (66 aa)) enclose the Plastocyanin-like domain.

It belongs to the FtsP family. Predicted to be exported by the Tat system. The position of the signal peptide cleavage has not been experimentally proven.

Its subcellular location is the periplasm. Its function is as follows. Cell division protein that is required for growth during stress conditions. May be involved in protecting or stabilizing the divisomal assembly under conditions of stress. This chain is Cell division protein FtsP, found in Salmonella typhi.